A 374-amino-acid polypeptide reads, in one-letter code: Methylthioribose-1-phosphate isomerase (374 aa).

Position 2 is an N-acetylserine (Ser-2). Residue Asp-253 is the Proton donor of the active site.

This sequence belongs to the eIF-2B alpha/beta/delta subunits family. MtnA subfamily.

Its subcellular location is the cytoplasm. It localises to the nucleus. The enzyme catalyses 5-(methylsulfanyl)-alpha-D-ribose 1-phosphate = 5-(methylsulfanyl)-D-ribulose 1-phosphate. The protein operates within amino-acid biosynthesis; L-methionine biosynthesis via salvage pathway; L-methionine from S-methyl-5-thio-alpha-D-ribose 1-phosphate: step 1/6. Functionally, catalyzes the interconversion of methylthioribose-1-phosphate (MTR-1-P) into methylthioribulose-1-phosphate (MTRu-1-P). In Arabidopsis thaliana (Mouse-ear cress), this protein is Methylthioribose-1-phosphate isomerase.